We begin with the raw amino-acid sequence, 346 residues long: Fe(3+) ions import ATP-binding protein FbpC 2 (346 aa).

The ABC transporter domain occupies 5–235 (LEVDGVDKSF…PVDVPTAEFI (231 aa)). Residue 37–44 (GPSGCGKT) coordinates ATP.

It belongs to the ABC transporter superfamily. Fe(3+) ion importer (TC 3.A.1.10) family. In terms of assembly, the complex is composed of two ATP-binding proteins (FbpC), two transmembrane proteins (FbpB) and a solute-binding protein (FbpA).

It is found in the cell membrane. The enzyme catalyses Fe(3+)(out) + ATP + H2O = Fe(3+)(in) + ADP + phosphate + H(+). Functionally, part of the ABC transporter complex FbpABC involved in Fe(3+) ions import. Responsible for energy coupling to the transport system. The protein is Fe(3+) ions import ATP-binding protein FbpC 2 of Rhodococcus jostii (strain RHA1).